Here is a 706-residue protein sequence, read N- to C-terminus: Polyribonucleotide nucleotidyltransferase (706 aa).

Residues Asp483 and Asp489 each contribute to the Mg(2+) site. In terms of domain architecture, KH spans 550-609 (PRITTIWVKTDKIRDVIGTGGKNIRNITETTGVTVDIEDTGRINIASTSKEACDLAIQMI). In terms of domain architecture, S1 motif spans 619–687 (GKLYMGIVKK…KNGKVKLSRK (69 aa)).

Belongs to the polyribonucleotide nucleotidyltransferase family. Requires Mg(2+) as cofactor.

The protein resides in the cytoplasm. It carries out the reaction RNA(n+1) + phosphate = RNA(n) + a ribonucleoside 5'-diphosphate. Functionally, involved in mRNA degradation. Catalyzes the phosphorolysis of single-stranded polyribonucleotides processively in the 3'- to 5'-direction. This is Polyribonucleotide nucleotidyltransferase from Pelobacter propionicus (strain DSM 2379 / NBRC 103807 / OttBd1).